The primary structure comprises 338 residues: 1-aminocyclopropane-1-carboxylate deaminase (338 aa).

Residue K51 is modified to N6-(pyridoxal phosphate)lysine. S78 acts as the Nucleophile in catalysis.

It belongs to the ACC deaminase/D-cysteine desulfhydrase family. In terms of assembly, homotrimer. It depends on pyridoxal 5'-phosphate as a cofactor.

It carries out the reaction 1-aminocyclopropane-1-carboxylate + H2O = 2-oxobutanoate + NH4(+). Functionally, catalyzes a cyclopropane ring-opening reaction, the irreversible conversion of 1-aminocyclopropane-1-carboxylate (ACC) to ammonia and alpha-ketobutyrate. Allows growth on ACC as a nitrogen source. The sequence is that of 1-aminocyclopropane-1-carboxylate deaminase from Pseudomonas fluorescens.